The sequence spans 201 residues: 3-isopropylmalate dehydratase small subunit (201 aa).

The protein belongs to the LeuD family. LeuD type 1 subfamily. As to quaternary structure, heterodimer of LeuC and LeuD.

The enzyme catalyses (2R,3S)-3-isopropylmalate = (2S)-2-isopropylmalate. The protein operates within amino-acid biosynthesis; L-leucine biosynthesis; L-leucine from 3-methyl-2-oxobutanoate: step 2/4. Catalyzes the isomerization between 2-isopropylmalate and 3-isopropylmalate, via the formation of 2-isopropylmaleate. The sequence is that of 3-isopropylmalate dehydratase small subunit from Salmonella paratyphi A (strain ATCC 9150 / SARB42).